Reading from the N-terminus, the 125-residue chain is Large ribosomal subunit protein bL12 (125 aa).

It belongs to the bacterial ribosomal protein bL12 family. In terms of assembly, homodimer. Part of the ribosomal stalk of the 50S ribosomal subunit. Forms a multimeric L10(L12)X complex, where L10 forms an elongated spine to which 2 to 4 L12 dimers bind in a sequential fashion. Binds GTP-bound translation factors.

Its function is as follows. Forms part of the ribosomal stalk which helps the ribosome interact with GTP-bound translation factors. Is thus essential for accurate translation. The protein is Large ribosomal subunit protein bL12 of Caldanaerobacter subterraneus subsp. tengcongensis (strain DSM 15242 / JCM 11007 / NBRC 100824 / MB4) (Thermoanaerobacter tengcongensis).